We begin with the raw amino-acid sequence, 195 residues long: Ras-related protein Rab-31 (195 aa).

GTP is bound by residues Gly16, Gly18, Lys19, Ser20, Ser21, Asp32, and His33. Ser20 contributes to the Mg(2+) binding site. 2 consecutive short sequence motifs (switch) follow at residues 30 to 42 (HFDH…IGAS) and 63 to 79 (AGQE…YRGS). Ser36 is subject to Phosphoserine. GTP is bound by residues Thr38, Gly64, Asn119, Asp122, Ala150, and Lys151. Thr38 contributes to the Mg(2+) binding site. Residues Cys194 and Cys195 are each lipidated (S-geranylgeranyl cysteine).

The protein belongs to the small GTPase superfamily. Rab family. In terms of assembly, interacts with OCRL. Interacts with NGFR. Interacts (in GDP-bound form) with RIN3 and GAPVD1, which function as guanine exchange factors (GEF). Interacts (in GTP-bound form) with EEA1. Interacts with EGFR. Interacts (in GTP-bound form) with APPL2; interaction contributes to or enhances recruitment of APPL2 to the phagosomes; interaction enhances Fc-gamma receptor-mediated phagocytosis through PI3K/Akt signaling in macrophages. Mg(2+) serves as cofactor. Highest expression in placenta and brain with lower levels in heart and lung. Not detected in liver, skeletal muscle, kidney or pancreas.

It is found in the golgi apparatus. It localises to the trans-Golgi network. Its subcellular location is the trans-Golgi network membrane. The protein resides in the early endosome. The protein localises to the cytoplasmic vesicle. It is found in the phagosome. It localises to the phagosome membrane. It carries out the reaction GTP + H2O = GDP + phosphate + H(+). With respect to regulation, regulated by guanine nucleotide exchange factors (GEFs) including RIN3 and GAPVD1 which promote the exchange of bound GDP for free GTP. Regulated by GTPase activating proteins (GAPs) which increase the GTP hydrolysis activity. Inhibited by GDP dissociation inhibitors (GDIs) which prevent Rab-GDP dissociation. Its function is as follows. The small GTPases Rab are key regulators of intracellular membrane trafficking, from the formation of transport vesicles to their fusion with membranes. Rabs cycle between an inactive GDP-bound form and an active GTP-bound form that is able to recruit to membranes different set of downstream effectors directly responsible for vesicle formation, movement, tethering and fusion. Required for the integrity and for normal function of the Golgi apparatus and the trans-Golgi network. Plays a role in insulin-stimulated translocation of GLUT4 to the cell membrane. Plays a role in M6PR transport from the trans-Golgi network to endosomes. Plays a role in the internalization of EGFR from the cell membrane into endosomes. Plays a role in the maturation of phagosomes that engulf pathogens, such as S.aureus and M.tuberculosis. The protein is Ras-related protein Rab-31 of Homo sapiens (Human).